A 253-amino-acid polypeptide reads, in one-letter code: Large ribosomal subunit protein uL4 (253 aa).

The interval 61–107 (GWGSGRGTSHVPRLVNSSRAARVPHARGGRRAHPPKPEADRSEKVNT) is disordered. Positions 82–94 (RVPHARGGRRAHP) are enriched in basic residues. The segment covering 95-107 (PKPEADRSEKVNT) has biased composition (basic and acidic residues).

It belongs to the universal ribosomal protein uL4 family. As to quaternary structure, part of the 50S ribosomal subunit.

Functionally, one of the primary rRNA binding proteins, this protein initially binds near the 5'-end of the 23S rRNA. It is important during the early stages of 50S assembly. It makes multiple contacts with different domains of the 23S rRNA in the assembled 50S subunit and ribosome. In terms of biological role, forms part of the polypeptide exit tunnel. This Methanosarcina barkeri (strain Fusaro / DSM 804) protein is Large ribosomal subunit protein uL4.